Consider the following 158-residue polypeptide: MEAERPQEDGEQSLPQDDQGWPPVNSTARPWRSAPPSPPPPGTRHTALGPRSGSLLSLQTELLLDLVAEAQSRRLEEQRAAFHTPKVPPSLAPTPPRLLEDKEQLYSTILSHQCQRIEAQRSDPPLPPGGQELLELLLRVQGGGRMEDQRSRPPTHTC.

The segment at 1-53 (MEAERPQEDGEQSLPQDDQGWPPVNSTARPWRSAPPSPPPPGTRHTALGPRSG) is disordered. A phosphoserine mark is found at S33 and S37. Pro residues predominate over residues 33–42 (SAPPSPPPPG). Residues 43 to 53 (TRHTALGPRSG) show a composition bias toward low complexity. S54 and S57 each carry phosphoserine. T60 bears the Phosphothreonine mark. The GoLoco 1 domain maps to 60–82 (TELLLDLVAEAQSRRLEEQRAAF). A disordered region spans residues 78-97 (QRAAFHTPKVPPSLAPTPPR). Residues 86–96 (KVPPSLAPTPP) are compositionally biased toward pro residues. 2 GoLoco domains span residues 102–124 (KEQLYSTILSHQCQRIEAQRSDP) and 130–153 (GQELLELLLRVQGGGRMEDQRSRP).

The protein resides in the cytoplasm. Interacts with subunit of G(i) alpha proteins and regulates the activation of G(i) alpha proteins. In Rattus norvegicus (Rat), this protein is G-protein-signaling modulator 3 (Gpsm3).